Here is a 916-residue protein sequence, read N- to C-terminus: Isoleucine--tRNA ligase (916 aa).

A 'HIGH' region motif is present at residues 57–67 (PYANGNLHMGH). Residue Glu554 coordinates L-isoleucyl-5'-AMP. Positions 595 to 599 (KMSKS) match the 'KMSKS' region motif. Lys598 serves as a coordination point for ATP. Residues Cys885, Cys888, Cys905, and Cys908 each coordinate Zn(2+).

The protein belongs to the class-I aminoacyl-tRNA synthetase family. IleS type 1 subfamily. As to quaternary structure, monomer. The cofactor is Zn(2+).

It localises to the cytoplasm. It carries out the reaction tRNA(Ile) + L-isoleucine + ATP = L-isoleucyl-tRNA(Ile) + AMP + diphosphate. Its function is as follows. Catalyzes the attachment of isoleucine to tRNA(Ile). As IleRS can inadvertently accommodate and process structurally similar amino acids such as valine, to avoid such errors it has two additional distinct tRNA(Ile)-dependent editing activities. One activity is designated as 'pretransfer' editing and involves the hydrolysis of activated Val-AMP. The other activity is designated 'posttransfer' editing and involves deacylation of mischarged Val-tRNA(Ile). This is Isoleucine--tRNA ligase from Staphylococcus haemolyticus (strain JCSC1435).